The sequence spans 715 residues: ATP-dependent zinc metalloprotease YME1L1 (715 aa).

The Mitochondrial matrix segment spans residues 1–237 (MFSLSSTVQP…TNDSLRRTRL (237 aa)). The disordered stretch occupies residues 34–54 (NTPVSQKQHRDTVPEHEAPSS). The span at 41 to 52 (QHRDTVPEHEAP) shows a compositional bias: basic and acidic residues. A helical membrane pass occupies residues 238-258 (ILFVLLLFGIYGLLKNPFLSV). At 259-715 (RFRTTTGLDS…VLEGKKLEVR (457 aa)) the chain is on the mitochondrial intermembrane side. ATP contacts are provided by V283, T325, G326, K327, T328, and L329. H541 is a binding site for Zn(2+). E542 is a catalytic residue. Residues H545 and D619 each contribute to the Zn(2+) site.

In the N-terminal section; belongs to the AAA ATPase family. It in the C-terminal section; belongs to the peptidase M41 family. In terms of assembly, homohexamer; may also form heterohexamers. Exists in several complexes of 600-1100 kDa. Interacts with AFG1L. Zn(2+) is required as a cofactor. Post-translationally, proteolytically processed by mitochondrial processing peptidase (MPP) to generate the mature form. Degraded in an OMA1-dependent manner in response to oxidative stress. Detected in heart and skeletal muscle (at protein level).

It localises to the mitochondrion inner membrane. It is found in the mitochondrion. The catalysed reaction is ATP + H2O = ADP + phosphate + H(+). Functionally, ATP-dependent metalloprotease that catalyzes the degradation of folded and unfolded proteins with a suitable degron sequence in the mitochondrial intermembrane region. Plays an important role in regulating mitochondrial morphology and function by cleaving OPA1 at position S2, giving rise to a form of OPA1 that promotes maintenance of normal mitochondrial structure and mitochondrial protein metabolism. Ensures cell proliferation, maintains normal cristae morphology and complex I respiration activity, promotes antiapoptotic activity and protects mitochondria from the accumulation of oxidatively damaged membrane proteins. Required to control the accumulation of nonassembled respiratory chain subunits (NDUFB6, OX4 and ND1). Involved in the mitochondrial adaptation in response to various signals, such as stress or developmental cues, by mediating degradation of mitochondrial proteins to rewire the mitochondrial proteome. Catalyzes degradation of mitochondrial proteins, such as translocases, lipid transfer proteins and metabolic enzymes in response to nutrient starvation in order to limit mitochondrial biogenesis: mechanistically, YME1L is activated by decreased phosphatidylethanolamine levels caused by LPIN1 activity in response to mTORC1 inhibition. Acts as a regulator of adult neural stem cell self-renewal by promoting mitochondrial proteome rewiring, preserving neural stem and progenitor cells self-renewal. Required for normal, constitutive degradation of PRELID1. Catalyzes the degradation of OMA1 in response to membrane depolarization. Mediates degradation of TIMM17A downstream of the integrated stress response (ISR). Catalyzes degradation of MICU1 when MICU1 is not assembled via an interchain disulfide. This Mus musculus (Mouse) protein is ATP-dependent zinc metalloprotease YME1L1 (Yme1l1).